Reading from the N-terminus, the 264-residue chain is Myozenin-2 (264 aa).

An Omega-N-methylarginine modification is found at Arg-53. Positions 90–135 (GKVDGSNLEGGSQQAPLTPPNTPDPRSPPNPDNIAPGYSGPLKEIP) are disordered. Ser-101 carries the post-translational modification Phosphoserine. A compositionally biased stretch (pro residues) spans 106–120 (LTPPNTPDPRSPPNP). Residues Thr-107 and Thr-111 each carry the phosphothreonine modification. Position 116 is a phosphoserine (Ser-116).

It belongs to the myozenin family. As to quaternary structure, interacts via its C-terminus with spectrin repeats 3 and 4 of ACTN2. Interacts with ACTN1, LDB3, MYOT and PPP3CA.

Its subcellular location is the cytoplasm. The protein localises to the myofibril. It is found in the sarcomere. The protein resides in the z line. Functionally, myozenins may serve as intracellular binding proteins involved in linking Z line proteins such as alpha-actinin, gamma-filamin, TCAP/telethonin, LDB3/ZASP and localizing calcineurin signaling to the sarcomere. Plays an important role in the modulation of calcineurin signaling. May play a role in myofibrillogenesis. In Pongo abelii (Sumatran orangutan), this protein is Myozenin-2 (MYOZ2).